Consider the following 259-residue polypeptide: Haloacid dehalogenase-like hydrolase domain-containing protein 2 (259 aa).

2 residues coordinate Mg(2+): D13 and N15. Residues 13–15 and 46–47 contribute to the substrate site; these read DLN and TN. A coiled-coil region spans residues 47–72; that stretch reads NTTKESKKDLLERLKKLEFEISEDEI. K50 is subject to N6-succinyllysine. K179 is a substrate binding site. D204 lines the Mg(2+) pocket.

Belongs to the HAD-like hydrolase superfamily. It depends on Mg(2+) as a cofactor.

The sequence is that of Haloacid dehalogenase-like hydrolase domain-containing protein 2 (Hdhd2) from Mus musculus (Mouse).